We begin with the raw amino-acid sequence, 166 residues long: Large ribosomal subunit protein uL10 (166 aa).

This sequence belongs to the universal ribosomal protein uL10 family. In terms of assembly, part of the ribosomal stalk of the 50S ribosomal subunit. The N-terminus interacts with L11 and the large rRNA to form the base of the stalk. The C-terminus forms an elongated spine to which L12 dimers bind in a sequential fashion forming a multimeric L10(L12)X complex.

Functionally, forms part of the ribosomal stalk, playing a central role in the interaction of the ribosome with GTP-bound translation factors. This is Large ribosomal subunit protein uL10 from Ureaplasma urealyticum serovar 10 (strain ATCC 33699 / Western).